The following is a 392-amino-acid chain: uncharacterized protein (392 aa).

The first 23 residues, 1-23 (MWTALVLVWISSVLLPRSHMMSA), serve as a signal peptide directing secretion. The Extracellular portion of the chain corresponds to 24–342 (EPRNIVTNKW…DALTPSLVNK (319 aa)). N-linked (GlcNAc...) asparagine glycosylation occurs at N77. Disordered regions lie at residues 83–154 (AEVT…PRTA) and 167–320 (AAGT…TDSC). The span at 86 to 97 (TTHGTNTSTPTT) shows a compositional bias: low complexity. Composition is skewed to polar residues over residues 107–127 (SRTL…TRPT) and 170–249 (TVNT…SAST). N-linked (GlcNAc...) asparagine glycosylation is present at N172. 2 stretches are compositionally biased toward low complexity: residues 265–277 (SPTT…LPTQ) and 284–309 (TLLT…SRSS). The helical transmembrane segment at 343-363 (MLLLVVLLVGVTLFIAVLVMF) threads the bilayer. The Cytoplasmic portion of the chain corresponds to 364-392 (ALQAYESYKKKDYTQVDYLINGMYADSEM).

It is found in the cell membrane. The protein resides in the golgi apparatus. The protein localises to the trans-Golgi network membrane. This is an uncharacterized protein from Mus musculus (Mouse).